The sequence spans 501 residues: L-arabinose isomerase (501 aa).

The Mn(2+) site is built by glutamate 307, glutamate 334, histidine 351, and histidine 450.

This sequence belongs to the arabinose isomerase family. Requires Mn(2+) as cofactor.

The enzyme catalyses beta-L-arabinopyranose = L-ribulose. It participates in carbohydrate degradation; L-arabinose degradation via L-ribulose; D-xylulose 5-phosphate from L-arabinose (bacterial route): step 1/3. Its function is as follows. Catalyzes the conversion of L-arabinose to L-ribulose. The sequence is that of L-arabinose isomerase from Acidothermus cellulolyticus (strain ATCC 43068 / DSM 8971 / 11B).